Consider the following 328-residue polypeptide: GTPase Obg (328 aa).

In terms of domain architecture, Obg spans 2–160 (YNFKDSVNIT…LSVRLELFLV (159 aa)). Positions 161 to 326 (ADIGLVGLPN…LIKEFFILAK (166 aa)) constitute an OBG-type G domain. GTP contacts are provided by residues 167–174 (GLPNAGKS), 192–196 (FTTKI), 213–216 (DIPG), 280–283 (NKLD), and 307–309 (SIY). Residues serine 174 and threonine 194 each contribute to the Mg(2+) site.

The protein belongs to the TRAFAC class OBG-HflX-like GTPase superfamily. OBG GTPase family. As to quaternary structure, monomer. The cofactor is Mg(2+).

Its subcellular location is the cytoplasm. Functionally, an essential GTPase which binds GTP, GDP and possibly (p)ppGpp with moderate affinity, with high nucleotide exchange rates and a fairly low GTP hydrolysis rate. Plays a role in control of the cell cycle, stress response, ribosome biogenesis and in those bacteria that undergo differentiation, in morphogenesis control. The protein is GTPase Obg of Borreliella burgdorferi (strain ATCC 35210 / DSM 4680 / CIP 102532 / B31) (Borrelia burgdorferi).